Reading from the N-terminus, the 364-residue chain is BTB/POZ and TAZ domain-containing protein 2 (364 aa).

The 73-residue stretch at 34–106 (SDVEIVTSDN…LYSSSLTEDE (73 aa)) folds into the BTB domain. The Nuclear localization signal signature appears at 203 to 212 (RKKRRRRHRK). The segment at 215 to 316 (DLYMQLSEAM…PDSCRVPLCR (102 aa)) adopts a TAZ-type zinc-finger fold. Residues 327–350 (KMGEDTKWKLLVTRVVSAKAMTSL) are caM-binding.

Interacts with CUL3A. Interacts with GTE11/BET10 through the BTB domain. As to expression, preferentially expressed in young leaves and roots.

It localises to the nucleus. It is found in the cytoplasm. It participates in protein modification; protein ubiquitination. May act as a substrate-specific adapter of an E3 ubiquitin-protein ligase complex (CUL3-RBX1-BTB) which mediates the ubiquitination and subsequent proteasomal degradation of target proteins. Plays a key role as a component of the TAC1-mediated telomerase activation pathway certainly by targeting a telomerase repressor to degradation. Seems to occupy an integral position in a complex signaling network that perceives, integrates, and responds to multiple, and sometimes competing, signals. Enhances responses to auxin in postgermination and vegetative development. Also negatively regulates ABA- and sugar-mediated inhibition of the germination. Essential for female and male gametophyte development. This Arabidopsis thaliana (Mouse-ear cress) protein is BTB/POZ and TAZ domain-containing protein 2 (BT2).